The sequence spans 155 residues: Rusticyanin (155 aa).

The Plastocyanin-like domain occupies 53-155 (SFEVHDKKNP…TGMFGKIIVK (103 aa)). Cu cation-binding residues include histidine 85, cysteine 138, histidine 143, and methionine 148.

In terms of assembly, monomer. Cu cation serves as cofactor.

It localises to the periplasm. Functionally, electron carrier from cytochrome c552 to the A-type oxidase. The sequence is that of Rusticyanin (rus) from Acidithiobacillus ferrooxidans (Thiobacillus ferrooxidans).